A 520-amino-acid chain; its full sequence is Arginine biosynthesis bifunctional protein ArgJ, chloroplastic (520 aa).

Residues threonine 264, lysine 290, threonine 301, glutamate 388, asparagine 515, and threonine 520 each contribute to the substrate site. Threonine 301 functions as the Nucleophile in the catalytic mechanism.

It belongs to the ArgJ family. In terms of assembly, heterodimer of an alpha and a beta chain.

The protein localises to the plastid. Its subcellular location is the chloroplast. The catalysed reaction is N(2)-acetyl-L-ornithine + L-glutamate = N-acetyl-L-glutamate + L-ornithine. It carries out the reaction L-glutamate + acetyl-CoA = N-acetyl-L-glutamate + CoA + H(+). The protein operates within amino-acid biosynthesis; L-arginine biosynthesis; L-ornithine and N-acetyl-L-glutamate from L-glutamate and N(2)-acetyl-L-ornithine (cyclic): step 1/1. It participates in amino-acid biosynthesis; L-arginine biosynthesis; N(2)-acetyl-L-ornithine from L-glutamate: step 1/4. In terms of biological role, catalyzes two activities which are involved in the cyclic version of arginine biosynthesis: the synthesis of acetylglutamate from glutamate and acetyl-CoA, and of ornithine by transacetylation between acetylornithine and glutamate. This chain is Arginine biosynthesis bifunctional protein ArgJ, chloroplastic, found in Physcomitrium patens (Spreading-leaved earth moss).